Here is a 98-residue protein sequence, read N- to C-terminus: Carboxysome shell protein CsoS1C (98 aa).

Residues 8 to 93 enclose the BMC domain; sequence ALGMIETRGL…VHSEVENILP (86 aa).

Belongs to the bacterial microcompartments protein family. CsoS1 subfamily. As to quaternary structure, homohexamer with a small central pore. Interacts with the N-terminus (residues 1-136) of RuBisCO (CbbL).

It is found in the carboxysome. Functionally, one of shell proteins of the carboxysome, a polyhedral inclusion where RuBisCO (ribulose bisphosphate carboxylase, ccbL-ccbS) is sequestered. Assembles into hexamers which make sheets that form the facets of the polyhedral carboxysome. The shell probably limits the diffusion of CO(2) into and out of the carboxysome. There are estimated to be 2970 CsoS1A/CsoS1C proteins per carboxysome (the proteins differ by only 1 residue). Unlike beta-carboxysomes, alpha-carboxysomes (Cb) can form without cargo protein. CsoS2 is essential for Cb formation and is also capable of targeting foreign proteins to the Cb. The Cb shell assembles with the aid of CsoS2; CsoS1A, CsoS1B and CsoS1C form the majority of the shell while CsoS4A and CsoS4B form vertices. CsoS1D forms pseudohexamers that probably control metabolite flux into and out of the shell. The sequence is that of Carboxysome shell protein CsoS1C from Halothiobacillus neapolitanus (strain ATCC 23641 / c2) (Thiobacillus neapolitanus).